We begin with the raw amino-acid sequence, 54 residues long: uncharacterized protein (54 aa).

The tract at residues Val-13 to Glu-54 is disordered. Positions Asn-20–Ala-32 are enriched in polar residues. A compositionally biased stretch (basic and acidic residues) spans Ile-41 to Glu-54.

This is an uncharacterized protein from Enterobacteria phage T4 (Bacteriophage T4).